Consider the following 367-residue polypeptide: Dihydroorotate dehydrogenase (quinone) (367 aa).

Residues 61–65 (AGFDK) and Thr85 each bind FMN. Lys65 lines the substrate pocket. 110–114 (NRMGF) contacts substrate. FMN-binding residues include Asn138 and Asn169. Asn169 serves as a coordination point for substrate. Ser172 (nucleophile) is an active-site residue. Asn174 is a substrate binding site. 2 residues coordinate FMN: Lys212 and Thr240. 241–242 (NT) provides a ligand contact to substrate. Residues Gly263, Gly292, and 313-314 (YS) contribute to the FMN site.

The protein belongs to the dihydroorotate dehydrogenase family. Type 2 subfamily. As to quaternary structure, monomer. Requires FMN as cofactor.

It localises to the cell membrane. The catalysed reaction is (S)-dihydroorotate + a quinone = orotate + a quinol. It participates in pyrimidine metabolism; UMP biosynthesis via de novo pathway; orotate from (S)-dihydroorotate (quinone route): step 1/1. Its function is as follows. Catalyzes the conversion of dihydroorotate to orotate with quinone as electron acceptor. This Rhodospirillum rubrum (strain ATCC 11170 / ATH 1.1.1 / DSM 467 / LMG 4362 / NCIMB 8255 / S1) protein is Dihydroorotate dehydrogenase (quinone).